The following is a 209-amino-acid chain: Protocatechuate 3,4-dioxygenase alpha chain (209 aa).

Arginine 142 contacts 3,4-dihydroxybenzoate.

This sequence belongs to the intradiol ring-cleavage dioxygenase family. As to quaternary structure, the enzyme is an oligomer of 12 copies of the alpha and beta chains. The cofactor is Fe(3+).

The enzyme catalyses 3,4-dihydroxybenzoate + O2 = 3-carboxy-cis,cis-muconate + 2 H(+). It participates in aromatic compound metabolism; beta-ketoadipate pathway; 3-carboxy-cis,cis-muconate from 3,4-dihydroxybenzoate: step 1/1. Plays an essential role in the utilization of numerous aromatic and hydroaromatic compounds via the beta-ketoadipate pathway. The sequence is that of Protocatechuate 3,4-dioxygenase alpha chain (pcaG) from Acinetobacter baylyi (strain ATCC 33305 / BD413 / ADP1).